The chain runs to 216 residues: Octanoyltransferase (216 aa).

Residues 33 to 216 (AATADELWIV…ANRLSTSLSR (184 aa)) enclose the BPL/LPL catalytic domain. Substrate contacts are provided by residues 72-79 (RGGEVTYH), 148-150 (ALG), and 162-164 (GVS). Residue C180 is the Acyl-thioester intermediate of the active site.

The protein belongs to the LipB family.

The protein localises to the cytoplasm. It carries out the reaction octanoyl-[ACP] + L-lysyl-[protein] = N(6)-octanoyl-L-lysyl-[protein] + holo-[ACP] + H(+). Its pathway is protein modification; protein lipoylation via endogenous pathway; protein N(6)-(lipoyl)lysine from octanoyl-[acyl-carrier-protein]: step 1/2. Its function is as follows. Catalyzes the transfer of endogenously produced octanoic acid from octanoyl-acyl-carrier-protein onto the lipoyl domains of lipoate-dependent enzymes. Lipoyl-ACP can also act as a substrate although octanoyl-ACP is likely to be the physiological substrate. This Janthinobacterium sp. (strain Marseille) (Minibacterium massiliensis) protein is Octanoyltransferase.